Consider the following 462-residue polypeptide: Argininosuccinate lyase (462 aa).

It belongs to the lyase 1 family. Argininosuccinate lyase subfamily.

The protein resides in the cytoplasm. It carries out the reaction 2-(N(omega)-L-arginino)succinate = fumarate + L-arginine. It participates in amino-acid biosynthesis; L-arginine biosynthesis; L-arginine from L-ornithine and carbamoyl phosphate: step 3/3. The polypeptide is Argininosuccinate lyase (Streptococcus agalactiae serotype V (strain ATCC BAA-611 / 2603 V/R)).